The sequence spans 190 residues: Probable nicotinate-nucleotide adenylyltransferase (190 aa).

Belongs to the NadD family.

The catalysed reaction is nicotinate beta-D-ribonucleotide + ATP + H(+) = deamido-NAD(+) + diphosphate. The protein operates within cofactor biosynthesis; NAD(+) biosynthesis; deamido-NAD(+) from nicotinate D-ribonucleotide: step 1/1. Catalyzes the reversible adenylation of nicotinate mononucleotide (NaMN) to nicotinic acid adenine dinucleotide (NaAD). This chain is Probable nicotinate-nucleotide adenylyltransferase, found in Frankia alni (strain DSM 45986 / CECT 9034 / ACN14a).